Consider the following 698-residue polypeptide: Polyribonucleotide nucleotidyltransferase (698 aa).

Residues D490 and D496 each coordinate Mg(2+). Positions 557–616 (PKVVTMTIKPDKIRDVIGPGGKKINEIIDETGVKLDIEQDGTIFIGAVDQAMINRAREII) constitute a KH domain. Residues 626 to 694 (GQTYQATVKR…KQGRVNASHR (69 aa)) enclose the S1 motif domain.

The protein belongs to the polyribonucleotide nucleotidyltransferase family. Mg(2+) serves as cofactor.

Its subcellular location is the cytoplasm. It carries out the reaction RNA(n+1) + phosphate = RNA(n) + a ribonucleoside 5'-diphosphate. In terms of biological role, involved in mRNA degradation. Catalyzes the phosphorolysis of single-stranded polyribonucleotides processively in the 3'- to 5'-direction. This Staphylococcus aureus (strain bovine RF122 / ET3-1) protein is Polyribonucleotide nucleotidyltransferase.